The chain runs to 391 residues: Coproporphyrin III ferrochelatase (391 aa).

Fe-coproporphyrin III is bound by residues S79 and Y148. Residues H211 and E305 each contribute to the Fe(2+) site.

This sequence belongs to the ferrochelatase family.

The protein resides in the cytoplasm. It carries out the reaction Fe-coproporphyrin III + 2 H(+) = coproporphyrin III + Fe(2+). It participates in porphyrin-containing compound metabolism; protoheme biosynthesis. Its function is as follows. Involved in coproporphyrin-dependent heme b biosynthesis. Catalyzes the insertion of ferrous iron into coproporphyrin III to form Fe-coproporphyrin III. This chain is Coproporphyrin III ferrochelatase, found in Tropheryma whipplei (strain TW08/27) (Whipple's bacillus).